The sequence spans 533 residues: T-complex protein 1 subunit delta (533 aa).

The disordered stretch occupies residues 1–26 (MSAPAAAPAKVLPSRSDFDEKEKEKD). The segment covering 16–26 (SDFDEKEKEKD) has biased composition (basic and acidic residues).

Belongs to the TCP-1 chaperonin family. In terms of assembly, heterooligomeric complex of about 850 to 900 kDa that forms two stacked rings, 12 to 16 nm in diameter.

The protein resides in the cytoplasm. Functionally, molecular chaperone; assists the folding of proteins upon ATP hydrolysis. Known to play a role, in vitro, in the folding of actin and tubulin. In Dictyostelium discoideum (Social amoeba), this protein is T-complex protein 1 subunit delta (cct4).